The primary structure comprises 311 residues: Ribosomal protein L11 methyltransferase (311 aa).

Residues Thr162, Gly183, Asp205, and Asn248 each coordinate S-adenosyl-L-methionine.

It belongs to the methyltransferase superfamily. PrmA family.

The protein resides in the cytoplasm. The enzyme catalyses L-lysyl-[protein] + 3 S-adenosyl-L-methionine = N(6),N(6),N(6)-trimethyl-L-lysyl-[protein] + 3 S-adenosyl-L-homocysteine + 3 H(+). In terms of biological role, methylates ribosomal protein L11. This chain is Ribosomal protein L11 methyltransferase, found in Bacillus licheniformis (strain ATCC 14580 / DSM 13 / JCM 2505 / CCUG 7422 / NBRC 12200 / NCIMB 9375 / NCTC 10341 / NRRL NRS-1264 / Gibson 46).